We begin with the raw amino-acid sequence, 414 residues long: Gamma-glutamyl phosphate reductase (414 aa).

The protein belongs to the gamma-glutamyl phosphate reductase family.

It localises to the cytoplasm. The enzyme catalyses L-glutamate 5-semialdehyde + phosphate + NADP(+) = L-glutamyl 5-phosphate + NADPH + H(+). It functions in the pathway amino-acid biosynthesis; L-proline biosynthesis; L-glutamate 5-semialdehyde from L-glutamate: step 2/2. In terms of biological role, catalyzes the NADPH-dependent reduction of L-glutamate 5-phosphate into L-glutamate 5-semialdehyde and phosphate. The product spontaneously undergoes cyclization to form 1-pyrroline-5-carboxylate. The chain is Gamma-glutamyl phosphate reductase from Clostridium botulinum (strain Eklund 17B / Type B).